A 134-amino-acid chain; its full sequence is MKPRRPSCADSGSDSDSRDPEKFESAMRRRMAANARERKRMQGLNTAFDRLRKVVPQWGQDKKLSKYETLQMALSYIMALNRILSDAGRHVDPQKDWLNLQFDGLQTEGYFMHYDSPVESDCMLSSFSYHYESL.

The disordered stretch occupies residues 1-27; sequence MKPRRPSCADSGSDSDSRDPEKFESAM. A compositionally biased stretch (basic and acidic residues) spans 15 to 27; the sequence is SDSRDPEKFESAM. The region spanning 28-80 is the bHLH domain; that stretch reads RRRMAANARERKRMQGLNTAFDRLRKVVPQWGQDKKLSKYETLQMALSYIMAL.

It is found in the nucleus. Its subcellular location is the perikaryon. It localises to the cell projection. The protein resides in the axon. Functionally, transcription factor that binds to DNA at the consensus sequence 5'-CAG[GC]TG-3'. Involved in the differentiation of retinal ganglion cells, photoreceptor population and optic nerve development. Required for retinal circadian rhythm photoentrainment. The sequence is that of Transcription factor atoh7 from Danio rerio (Zebrafish).